Consider the following 291-residue polypeptide: Pyridoxal 5'-phosphate synthase subunit PdxS (291 aa).

A D-ribose 5-phosphate-binding site is contributed by Asp23. Lys80 acts as the Schiff-base intermediate with D-ribose 5-phosphate in catalysis. D-ribose 5-phosphate is bound at residue Gly152. Arg164 contacts D-glyceraldehyde 3-phosphate. D-ribose 5-phosphate contacts are provided by residues Gly213 and 234–235; that span reads GS.

The protein belongs to the PdxS/SNZ family. As to quaternary structure, in the presence of PdxT, forms a dodecamer of heterodimers.

The enzyme catalyses aldehydo-D-ribose 5-phosphate + D-glyceraldehyde 3-phosphate + L-glutamine = pyridoxal 5'-phosphate + L-glutamate + phosphate + 3 H2O + H(+). Its pathway is cofactor biosynthesis; pyridoxal 5'-phosphate biosynthesis. Functionally, catalyzes the formation of pyridoxal 5'-phosphate from ribose 5-phosphate (RBP), glyceraldehyde 3-phosphate (G3P) and ammonia. The ammonia is provided by the PdxT subunit. Can also use ribulose 5-phosphate and dihydroxyacetone phosphate as substrates, resulting from enzyme-catalyzed isomerization of RBP and G3P, respectively. The sequence is that of Pyridoxal 5'-phosphate synthase subunit PdxS from Desulfitobacterium hafniense (strain DSM 10664 / DCB-2).